The primary structure comprises 81 residues: Ferredoxin (81 aa).

The 4Fe-4S ferredoxin-type domain maps to lysine 2 to aspartate 30. Cysteine 11, cysteine 14, cysteine 17, and cysteine 61 together coordinate [4Fe-4S] cluster.

The cofactor is [4Fe-4S] cluster.

Its function is as follows. Ferredoxins are iron-sulfur proteins that transfer electrons in a wide variety of metabolic reactions. The protein is Ferredoxin of Bacillus thermoproteolyticus.